The primary structure comprises 83 residues: MIGLAYFLIIWLGVGLLTGIKFIFVDQVYDEEFKELMDKETAAGMERNLASLFFKNKLNVIAFFMLIGLLPLAMRITKLFKRG.

Transmembrane regions (helical) follow at residues 5 to 25 (AYFL…FIFV) and 60 to 80 (VIAF…TKLF).

Its subcellular location is the cell membrane. The sequence is that of SPbeta prophage-derived uncharacterized protein YopE (yopE) from Bacillus subtilis (strain 168).